The following is a 465-amino-acid chain: Argininosuccinate lyase (465 aa).

This sequence belongs to the lyase 1 family. Argininosuccinate lyase subfamily.

The protein localises to the cytoplasm. The catalysed reaction is 2-(N(omega)-L-arginino)succinate = fumarate + L-arginine. It participates in amino-acid biosynthesis; L-arginine biosynthesis; L-arginine from L-ornithine and carbamoyl phosphate: step 3/3. The sequence is that of Argininosuccinate lyase from Deinococcus deserti (strain DSM 17065 / CIP 109153 / LMG 22923 / VCD115).